The chain runs to 2614 residues: Talin-B (2614 aa).

One can recognise an FERM domain in the interval 85 to 369 (RPLKVRLMDE…GYIEILMKKR (285 aa)). Positions 393-421 (RGQTSQATTSSSLSGYDGNGGREGQYSAP) are disordered. The span at 395–406 (QTSQATTSSSLS) shows a compositional bias: low complexity. Coiled-coil stretches lie at residues 1938–1965 (TQNI…ASGK) and 2033–2057 (NKAI…LVQS). The 242-residue stretch at 2219–2460 (LLFAAGESLE…SIRKKEYSDQ (242 aa)) folds into the I/LWEQ domain. A disordered region spans residues 2454–2557 (KKEYSDQTGN…AAPTAAAPNK (104 aa)). Over residues 2473–2487 (KPTTSISVGITPTKR) the composition is skewed to polar residues. The segment covering 2517–2537 (KKPAPSQAPSSPVAPVSAPVS) has biased composition (low complexity). Residues 2538 to 2548 (KPSPKPAPKPA) show a composition bias toward pro residues. The region spanning 2553–2614 (AAPNKTYTLE…NNIKTKLGLF (62 aa)) is the HP domain.

It is found in the cytoplasm. It localises to the cytoskeleton. The protein resides in the cell cortex. Functionally, actin-binding protein required for multicellular morphogenesis. Substrate of pkgB and/or pkbA. The chain is Talin-B (talB) from Dictyostelium discoideum (Social amoeba).